We begin with the raw amino-acid sequence, 222 residues long: Peptidyl-prolyl cis-trans isomerase FKBP7 (222 aa).

Residues 1-23 form the signal peptide; the sequence is MPKTMHFLFRFIVFFYLWGLFTA. Asn45 carries an N-linked (GlcNAc...) asparagine glycan. The PPIase FKBP-type domain occupies 53-145; the sequence is GDLLNAHYDG…IFEIELYAVT (93 aa). EF-hand domains follow at residues 145–180 and 189–222; these read TKGPRSTETFKQIDMDSDRQLSKAEINLYLQREFEK and YQDAVLEDIFKKNDHDGDGFISPKEYNVYQHDEL. Positions 158, 160, 162, 164, 169, 202, 204, 206, and 213 each coordinate Ca(2+). Residues 219–222 carry the Prevents secretion from ER motif; it reads HDEL.

Glycosylated.

Its subcellular location is the endoplasmic reticulum lumen. The catalysed reaction is [protein]-peptidylproline (omega=180) = [protein]-peptidylproline (omega=0). Its function is as follows. PPIases accelerate the folding of proteins during protein synthesis. The protein is Peptidyl-prolyl cis-trans isomerase FKBP7 (FKBP7) of Pongo abelii (Sumatran orangutan).